The primary structure comprises 189 residues: Transcription factor E (189 aa).

The HTH TFE/IIEalpha-type domain occupies 9 to 101 (AVKSLEIYVR…FWRIDSDTIN (93 aa)).

This sequence belongs to the TFE family. Monomer. Interaction with RNA polymerase subunits RpoF and RpoE is necessary for Tfe stimulatory transcription activity. Able to interact with Tbp and RNA polymerase in the absence of DNA promoter. Interacts both with the preinitiation and elongation complexes.

Functionally, transcription factor that plays a role in the activation of archaeal genes transcribed by RNA polymerase. Facilitates transcription initiation by enhancing TATA-box recognition by TATA-box-binding protein (Tbp), and transcription factor B (Tfb) and RNA polymerase recruitment. Not absolutely required for transcription in vitro, but particularly important in cases where Tbp or Tfb function is not optimal. It dynamically alters the nucleic acid-binding properties of RNA polymerases by stabilizing the initiation complex and destabilizing elongation complexes. Seems to translocate with the RNA polymerase following initiation and acts by binding to the non template strand of the transcription bubble in elongation complexes. The polypeptide is Transcription factor E (Aeropyrum pernix (strain ATCC 700893 / DSM 11879 / JCM 9820 / NBRC 100138 / K1)).